The primary structure comprises 664 residues: 26S rRNA (cytosine-C(5))-methyltransferase nsun-1 (664 aa).

The segment at 1–105 (MAIVKKKKVS…DDSDAGDHLP (105 aa)) is disordered. A compositionally biased stretch (basic residues) spans 38–52 (PKKKKLVKKVKKSAK). A compositionally biased stretch (basic and acidic residues) spans 53–68 (KAHEEEPIEQVEKLQL). Acidic residues predominate over residues 84–99 (SDDEDLRDDYSDDDSD). Residues 313–319 (CSAPGGK), aspartate 337, and aspartate 382 each bind S-adenosyl-L-methionine. Cysteine 439 (nucleophile) is an active-site residue. Positions 513-664 (KMSKQGVMEK…RRKKMLAKQQ (152 aa)) are disordered. Basic and acidic residues predominate over residues 519 to 528 (VMEKEKEKAA). Positions 541–550 (EASESSDDEE) are enriched in acidic residues. Basic residues predominate over residues 563 to 572 (KPAKKQQQKK). The span at 606-618 (KAAEKQAAVKEDD) shows a compositional bias: basic and acidic residues. Composition is skewed to basic residues over residues 627 to 644 (KRAKKPTQFKSKVPKRAA) and 652 to 664 (VKNRRKKMLAKQQ).

This sequence belongs to the class I-like SAM-binding methyltransferase superfamily. RsmB/NOP family.

The protein resides in the nucleus. It localises to the nucleolus. The enzyme catalyses a cytidine in 26S rRNA + S-adenosyl-L-methionine = a 5-methylcytidine in 26S rRNA + S-adenosyl-L-homocysteine + H(+). Methyltransferase which methylates the carbon-5 position of cytosine 2982 to 5-methylcytosine (m5C2982) in 26S rRNA. May play a role in the translation of leucine and proline codons. May be required for the translation of specific mRNAs such as mRNAs involved in gonad development, collagen production and cuticle integrity. Plays a role in ensuring the correct localization of the germline-specific protein gld-1 during development. Not required for pre-rRNA processing, the production of mature 5S, 5.8S, 18S or 26S rRNAs or global translation. Plays a role in positively regulating fertility. The protein is 26S rRNA (cytosine-C(5))-methyltransferase nsun-1 of Caenorhabditis elegans.